The following is a 177-amino-acid chain: MEQIIAKRYASALFDVAKKEDRVKEYYEELKKAVEILQTEAVWKIFVNKSIDKTKKMKFVEEVLEGFSKEIVNFVKVAISKHRENLIKEILNEFEALYKAYFNMIDVKVISAYPLKEEVLNLVREKLEKKYNKKVNLIPVVDKEILGGLKLVIGNTVIDGSIKARLEALLKNMRQAV.

It belongs to the ATPase delta chain family. In terms of assembly, F-type ATPases have 2 components, F(1) - the catalytic core - and F(0) - the membrane proton channel. F(1) has five subunits: alpha(3), beta(3), gamma(1), delta(1), epsilon(1). F(0) has three main subunits: a(1), b(2) and c(10-14). The alpha and beta chains form an alternating ring which encloses part of the gamma chain. F(1) is attached to F(0) by a central stalk formed by the gamma and epsilon chains, while a peripheral stalk is formed by the delta and b chains.

It localises to the cell membrane. Its function is as follows. F(1)F(0) ATP synthase produces ATP from ADP in the presence of a proton or sodium gradient. F-type ATPases consist of two structural domains, F(1) containing the extramembraneous catalytic core and F(0) containing the membrane proton channel, linked together by a central stalk and a peripheral stalk. During catalysis, ATP synthesis in the catalytic domain of F(1) is coupled via a rotary mechanism of the central stalk subunits to proton translocation. In terms of biological role, this protein is part of the stalk that links CF(0) to CF(1). It either transmits conformational changes from CF(0) to CF(1) or is implicated in proton conduction. In Caldanaerobacter subterraneus subsp. tengcongensis (strain DSM 15242 / JCM 11007 / NBRC 100824 / MB4) (Thermoanaerobacter tengcongensis), this protein is ATP synthase subunit delta.